The primary structure comprises 481 residues: tRNA-2-methylthio-N(6)-dimethylallyladenosine synthase (481 aa).

Positions 24–140 (KKLFIESYGC…LPNLLAEVEE (117 aa)) constitute an MTTase N-terminal domain. 6 residues coordinate [4Fe-4S] cluster: cysteine 33, cysteine 69, cysteine 103, cysteine 178, cysteine 182, and cysteine 185. The region spanning 164-411 (MSNGITALVS…DLQQKHAWFR (248 aa)) is the Radical SAM core domain. Residues 413–476 (EEFVGKTVEV…SGTLKGEAVG (64 aa)) form the TRAM domain.

The protein belongs to the methylthiotransferase family. MiaB subfamily. Monomer. [4Fe-4S] cluster serves as cofactor.

The protein localises to the cytoplasm. It catalyses the reaction N(6)-dimethylallyladenosine(37) in tRNA + (sulfur carrier)-SH + AH2 + 2 S-adenosyl-L-methionine = 2-methylsulfanyl-N(6)-dimethylallyladenosine(37) in tRNA + (sulfur carrier)-H + 5'-deoxyadenosine + L-methionine + A + S-adenosyl-L-homocysteine + 2 H(+). Functionally, catalyzes the methylthiolation of N6-(dimethylallyl)adenosine (i(6)A), leading to the formation of 2-methylthio-N6-(dimethylallyl)adenosine (ms(2)i(6)A) at position 37 in tRNAs that read codons beginning with uridine. In Flavobacterium johnsoniae (strain ATCC 17061 / DSM 2064 / JCM 8514 / BCRC 14874 / CCUG 350202 / NBRC 14942 / NCIMB 11054 / UW101) (Cytophaga johnsonae), this protein is tRNA-2-methylthio-N(6)-dimethylallyladenosine synthase.